The following is a 297-amino-acid chain: 33 kDa chaperonin (297 aa).

Intrachain disulfides connect cysteine 232-cysteine 234 and cysteine 266-cysteine 269.

It belongs to the HSP33 family. Under oxidizing conditions two disulfide bonds are formed involving the reactive cysteines. Under reducing conditions zinc is bound to the reactive cysteines and the protein is inactive.

The protein resides in the cytoplasm. Functionally, redox regulated molecular chaperone. Protects both thermally unfolding and oxidatively damaged proteins from irreversible aggregation. Plays an important role in the bacterial defense system toward oxidative stress. The sequence is that of 33 kDa chaperonin from Pseudomonas aeruginosa (strain UCBPP-PA14).